The sequence spans 324 residues: ATP phosphoribosyltransferase regulatory subunit (324 aa).

The protein belongs to the class-II aminoacyl-tRNA synthetase family. HisZ subfamily. Heteromultimer composed of HisG and HisZ subunits.

The protein localises to the cytoplasm. It participates in amino-acid biosynthesis; L-histidine biosynthesis; L-histidine from 5-phospho-alpha-D-ribose 1-diphosphate: step 1/9. Its function is as follows. Required for the first step of histidine biosynthesis. May allow the feedback regulation of ATP phosphoribosyltransferase activity by histidine. The protein is ATP phosphoribosyltransferase regulatory subunit of Carboxydothermus hydrogenoformans (strain ATCC BAA-161 / DSM 6008 / Z-2901).